The primary structure comprises 367 residues: MSNEADLLHGPLEDRHRDLGASFAEFGGWLMPVSYAGTVSEHNATRNAVGLFDVSHLGKALVRGTGAARFVNSALTNDLNRIGPGKAQYTLCCNESGGVIDDLIAYYVDDDEIFLVPNAANTAAVVEALQGAAPAGVTVRNLHRSYAVLAVQGPRSANVLAELGLPSDMDYMAYADTSFRQVPVRVCRTGYTGEHGYELLPPWESAGVVFDALAAAVSQAGGQPAGLGARDTLRTEMGYPLHGHELSPDISPLQARCGWAIGWKKEAFFGRDALLAEKEAGPRRLLRGLRMVGRGVLRAGLTVLVGDTPVGVTTSGTFSPTLQAGIALALINTDADVRDGQEVTVDVRGRAATCEVVRPPFVAVKTR.

This sequence belongs to the GcvT family. In terms of assembly, the glycine cleavage system is composed of four proteins: P, T, L and H.

It carries out the reaction N(6)-[(R)-S(8)-aminomethyldihydrolipoyl]-L-lysyl-[protein] + (6S)-5,6,7,8-tetrahydrofolate = N(6)-[(R)-dihydrolipoyl]-L-lysyl-[protein] + (6R)-5,10-methylene-5,6,7,8-tetrahydrofolate + NH4(+). Functionally, the glycine cleavage system catalyzes the degradation of glycine. This is Aminomethyltransferase from Mycolicibacterium paratuberculosis (strain ATCC BAA-968 / K-10) (Mycobacterium paratuberculosis).